Here is an 882-residue protein sequence, read N- to C-terminus: Alanine--tRNA ligase (882 aa).

Zn(2+)-binding residues include His571, His575, Cys673, and His677.

The protein belongs to the class-II aminoacyl-tRNA synthetase family. Zn(2+) is required as a cofactor.

Its subcellular location is the cytoplasm. The enzyme catalyses tRNA(Ala) + L-alanine + ATP = L-alanyl-tRNA(Ala) + AMP + diphosphate. Its function is as follows. Catalyzes the attachment of alanine to tRNA(Ala) in a two-step reaction: alanine is first activated by ATP to form Ala-AMP and then transferred to the acceptor end of tRNA(Ala). Also edits incorrectly charged Ser-tRNA(Ala) and Gly-tRNA(Ala) via its editing domain. The polypeptide is Alanine--tRNA ligase (Stenotrophomonas maltophilia (strain K279a)).